A 172-amino-acid polypeptide reads, in one-letter code: Adenine phosphoribosyltransferase (172 aa).

Belongs to the purine/pyrimidine phosphoribosyltransferase family. As to quaternary structure, homodimer.

The protein localises to the cytoplasm. It catalyses the reaction AMP + diphosphate = 5-phospho-alpha-D-ribose 1-diphosphate + adenine. It participates in purine metabolism; AMP biosynthesis via salvage pathway; AMP from adenine: step 1/1. In terms of biological role, catalyzes a salvage reaction resulting in the formation of AMP, that is energically less costly than de novo synthesis. In Crocosphaera subtropica (strain ATCC 51142 / BH68) (Cyanothece sp. (strain ATCC 51142)), this protein is Adenine phosphoribosyltransferase.